The following is a 2779-amino-acid chain: Protein lava lamp (2779 aa).

3 disordered regions span residues 31-62 (LAGS…DSLK), 79-98 (ALRK…SMES), and 110-135 (KTRS…VSLL). Polar residues predominate over residues 33–51 (GSSNDLSSLQNVSASTTRG). Phosphoserine occurs at positions 34 and 35. Residues 52 to 85 (TKGKGRLDSLKENLYKQQERLTALKERALRKSQD) adopt a coiled-coil conformation. A compositionally biased stretch (basic and acidic residues) spans 79–91 (ALRKSQDERHKSS). Phosphoserine occurs at positions 95, 98, 122, and 133. A coiled-coil region spans residues 141–175 (EKLLMLTQRTEQNRALLEQRKRDLAKSLLSVKSNI). Phosphoserine is present on residues Ser186, Ser352, and Ser354. Coiled coils occupy residues 220-607 (ESRV…AESI) and 659-716 (GETL…KDLI). The segment covering 337–352 (ERQRNLELEQEQEKAS) has biased composition (basic and acidic residues). Disordered regions lie at residues 337 to 366 (ERQR…DAQV), 622 to 662 (RPAS…GETL), 711 to 730 (REKD…QELS), and 1716 to 1753 (QAQL…GGDA). 2 stretches are compositionally biased toward low complexity: residues 717 to 730 (SSTS…QELS) and 1716 to 1740 (QAQL…QSQQ). 3 coiled-coil regions span residues 751–1733 (LFEK…QHHH), 1785–1863 (TIED…KLIQ), and 1941–2433 (NEAP…QSQN). 4 disordered regions span residues 2348-2367 (EDKE…GETV), 2484-2507 (EEVT…EATS), 2552-2578 (NRGG…TANE), and 2633-2665 (TERS…AGSN). The span at 2488 to 2502 (QQQQRELPQSQQSTQ) shows a compositional bias: low complexity. A coiled-coil region spans residues 2504–2544 (EATSDIMQKMQKALETQEMEIVTLKEQLAIRSAEYARLAAQ). A coiled-coil region spans residues 2600–2641 (DMRVEEMIVELVQLLEERDHLQLKLSDTLRQLETERSRVSDE). Residues 2643–2665 (SATASSSAASSSSPSKISSAGSN) are compositionally biased toward low complexity.

In terms of assembly, interacts with CLIP-190 and spectrin separately.

It localises to the golgi apparatus. The protein localises to the cytoplasmic vesicle. The protein resides in the autophagosome. Lva and spectrin may form a Golgi-based scaffold that mediates interaction of Golgi bodies with microtubules and facilitates Golgi-derived membrane secretion required for the formation of furrows during cellularization. Under starvation conditions recruited by ema to developing autophagsosomes where it may function in autophagosome growth. This Drosophila melanogaster (Fruit fly) protein is Protein lava lamp (lva).